Consider the following 117-residue polypeptide: Putative membrane protein insertion efficiency factor (117 aa).

It belongs to the UPF0161 family.

The protein resides in the cell inner membrane. Could be involved in insertion of integral membrane proteins into the membrane. This is Putative membrane protein insertion efficiency factor from Bartonella henselae (strain ATCC 49882 / DSM 28221 / CCUG 30454 / Houston 1) (Rochalimaea henselae).